The sequence spans 110 residues: uncharacterized protein (110 aa).

An N-terminal signal peptide occupies residues 1–23 (MKRITINIITMFIAAAVISLTGT).

This is an uncharacterized protein from Bacillus subtilis (strain 168).